The chain runs to 219 residues: Thiamine-phosphate synthase (219 aa).

4-amino-2-methyl-5-(diphosphooxymethyl)pyrimidine is bound by residues 48–52 and Asn-84; that span reads QFRQK. Mg(2+) contacts are provided by Asp-85 and Asp-104. Ser-123 serves as a coordination point for 4-amino-2-methyl-5-(diphosphooxymethyl)pyrimidine. 150–152 is a 2-[(2R,5Z)-2-carboxy-4-methylthiazol-5(2H)-ylidene]ethyl phosphate binding site; the sequence is TQS. Position 153 (Lys-153) interacts with 4-amino-2-methyl-5-(diphosphooxymethyl)pyrimidine. 2-[(2R,5Z)-2-carboxy-4-methylthiazol-5(2H)-ylidene]ethyl phosphate is bound by residues Gly-181 and 199–200; that span reads IS.

It belongs to the thiamine-phosphate synthase family. The cofactor is Mg(2+).

It carries out the reaction 2-[(2R,5Z)-2-carboxy-4-methylthiazol-5(2H)-ylidene]ethyl phosphate + 4-amino-2-methyl-5-(diphosphooxymethyl)pyrimidine + 2 H(+) = thiamine phosphate + CO2 + diphosphate. The catalysed reaction is 2-(2-carboxy-4-methylthiazol-5-yl)ethyl phosphate + 4-amino-2-methyl-5-(diphosphooxymethyl)pyrimidine + 2 H(+) = thiamine phosphate + CO2 + diphosphate. It catalyses the reaction 4-methyl-5-(2-phosphooxyethyl)-thiazole + 4-amino-2-methyl-5-(diphosphooxymethyl)pyrimidine + H(+) = thiamine phosphate + diphosphate. It functions in the pathway cofactor biosynthesis; thiamine diphosphate biosynthesis; thiamine phosphate from 4-amino-2-methyl-5-diphosphomethylpyrimidine and 4-methyl-5-(2-phosphoethyl)-thiazole: step 1/1. In terms of biological role, condenses 4-methyl-5-(beta-hydroxyethyl)thiazole monophosphate (THZ-P) and 2-methyl-4-amino-5-hydroxymethyl pyrimidine pyrophosphate (HMP-PP) to form thiamine monophosphate (TMP). In Helicobacter pylori (strain Shi470), this protein is Thiamine-phosphate synthase.